An 818-amino-acid chain; its full sequence is G-type lectin S-receptor-like serine/threonine-protein kinase At1g67520 (818 aa).

Residues 1-22 (MCSNGIFVSLLTLSLLLGKSCS) form the signal peptide. The Extracellular segment spans residues 23 to 387 (ETDTLHQGQF…NENKKVAAWH (365 aa)). The 126-residue stretch at 24–149 (TDTLHQGQFL…DADGSMKRVL (126 aa)) folds into the Bulb-type lectin domain. 3 N-linked (GlcNAc...) asparagine glycosylation sites follow: N123, N199, and N337. Positions 290–379 (CLAAGYVVRD…PRTIYIRGNE (90 aa)) constitute a PAN domain. Disulfide bonds link C330-C353 and C334-C340. A helical membrane pass occupies residues 388–408 (IVVATLFLMTPIIWFIIYLVL). At 409 to 818 (RKFNVKGRNC…SITITVLEAR (410 aa)) the chain is on the cytoplasmic side. The Protein kinase domain maps to 496-785 (FSDENKLGEG…ALSLPKEPAF (290 aa)). Residues 502–510 (LGEGGFGPV) and K524 each bind ATP. S530 bears the Phosphoserine mark. A caM-binding region spans residues 585-602 (LRKNVLDWTLRFRIMEGI). Residue D621 is the Proton acceptor of the active site. S625 and S638 each carry phosphoserine. The residue at position 655 (T655) is a Phosphothreonine. 2 positions are modified to phosphoserine: S699 and S807. T813 is modified (phosphothreonine).

The protein belongs to the protein kinase superfamily. Ser/Thr protein kinase family.

The protein localises to the cell membrane. It catalyses the reaction L-seryl-[protein] + ATP = O-phospho-L-seryl-[protein] + ADP + H(+). The catalysed reaction is L-threonyl-[protein] + ATP = O-phospho-L-threonyl-[protein] + ADP + H(+). In Arabidopsis thaliana (Mouse-ear cress), this protein is G-type lectin S-receptor-like serine/threonine-protein kinase At1g67520.